A 132-amino-acid chain; its full sequence is Small ribosomal subunit protein uS8 (132 aa).

Belongs to the universal ribosomal protein uS8 family. Part of the 30S ribosomal subunit. Contacts proteins S5 and S12.

One of the primary rRNA binding proteins, it binds directly to 16S rRNA central domain where it helps coordinate assembly of the platform of the 30S subunit. This is Small ribosomal subunit protein uS8 from Ligilactobacillus salivarius (strain UCC118) (Lactobacillus salivarius).